The primary structure comprises 940 residues: MASISDDGMVLSGYHKKLKTMKKKFFVLYEETSINQARLEYYDTEKKFLQRAEPKRVIYLKDCFNINRRLDTKHRFVIVLSSREGGFGIVLESENDLRKWLDKLLLLQRNIANVNGQVYSAYEHVWQVIIQKKGMSEKVGITGTYHCCLSAKSLTFVCIGPEKTANGDDRISSIEILLTTIRRCGHASPQCIFYMELGRQSVLGSGELWMETDNAAIATNMHNTILSAMSAKTDSNTNLINVYQARPDISHEPMRKRSSSANEASKPINVIQNRQNSLELRNCSSPHNYGFPRERCDSLPTRNGTLSESSNQSYFGSNLGLRSNTISGIRPHSTSKHSNSPTFNMPLRCSESEDSSISIDESDDNASFGHYRLNTRSSKGAIPEENLDDFASAEYCKGSGPSGDDNYIPMTPIKPASFCEPDKVELPKPDDPNLHINFPEHTSEKLENDFDLDSDNQCGRPIRAYSIGNKVEHLKLNRRLGYLNDTGQNSNRVRAYSVGSKSKIPRCDLQRVVLVEDNRFDTNRSQNNISKEGPISGTSTNREKKSTSAPLLSLKNQINQDRMSDLMEIDFSQSSKIEPWTPAQFKRNVMDVVPKNIESVFPKSYRNDSSNLTLHATSQKDIFNGGKLNTTESSSEGGYLEMKPVGNAFSSSPVTLPSKIEKLKLKDNTELPVHELHKVSSYNIPPEKRKEQTPTQTRIEEKTLNSQLNEKLINTESANVVANITPNVPELKSDKKNNVESLIIENNNWDLGTTDEKKLVHSISSEDYTQIKDKLNDLTKNNEVGYKILQIKSDSSLISSKITLKNRLRDNLERQQRLTESVNTIPDKSPSATTKGTFYSLGNNFQTPPNNVVNNTLDNILQTKDLNFPSRPSSQASQPELHYAKLDLPNCSDQNPAKYLKRGSRESPPVATCAEDGNTYARIDFDQSDSSSSSSKIFNM.

The PH domain occupies 8 to 109 (GMVLSGYHKK…WLDKLLLLQR (102 aa)). An IRS-type PTB domain is found at 122-236 (YEHVWQVIIQ…SAMSAKTDSN (115 aa)). Phosphoserine is present on residues S284, S285, and S340. Position 407 is a phosphotyrosine; by INSR (Y407). Positions 407-410 (YIPM) match the YXXM motif 1 motif. Residues 523–540 (NRSQNNISKEGPISGTST) are compositionally biased toward polar residues. The tract at residues 523–549 (NRSQNNISKEGPISGTSTNREKKSTSA) is disordered. S548 bears the Phosphoserine mark. Positions 639-642 (YLEM) match the YXXM motif 2 motif. The residue at position 883 (Y883) is a Phosphotyrosine; by INSR. Residues 895 to 915 (NPAKYLKRGSRESPPVATCAE) are disordered. 2 positions are modified to phosphoserine: S904 and S907. Y920 bears the Phosphotyrosine; by INSR mark.

As to quaternary structure, bindings to phosphatidylinositol 3-kinase and SHP2.

Functionally, activates phosphatidylinositol 3-kinase when bound to the regulatory p85 subunit. May mediate the control of various cellular processes by insulin-like peptides. When phosphorylated by the insulin receptor binds specifically to various cellular proteins containing SH2 domains. Involved in control of cell proliferation, cell size, and body and organ growth throughout development. Also has a role in a signaling pathway controlling the physiological response required to endure periods of low nutrient conditions. Insulin/insulin-like growth factor (IGF) signaling pathway has a role in regulating aging and is necessary in the ovary for vitellogenic maturation. The protein is Insulin receptor substrate 1 of Drosophila ananassae (Fruit fly).